The chain runs to 523 residues: Cytoplasmic dynein 1 light intermediate chain 1 (523 aa).

The segment at 1–25 (MAAVGRVGSFGSSPPGLASTYASGP) is disordered. Residue 74–81 (GEDGAGKT) coordinates ATP. Disordered regions lie at residues 200–219 (PGEDFPASPQRRTTGAQEDR), 387–434 (PPTA…DPNM), and 457–523 (GSPG…GEAS). Ser207 is modified (phosphoserine). Thr213 is subject to Phosphothreonine. Ser398 and Ser405 each carry phosphoserine. Phosphothreonine is present on Thr408. Phosphoserine occurs at positions 412, 419, 421, and 427. Positions 412-421 (SVSSNVASVS) are enriched in low complexity. Over residues 458-473 (SPGGPGVGGSPGGGAA) the composition is skewed to gly residues. Low complexity predominate over residues 474-485 (GASPSLPPSAKK). Ser486 and Ser510 each carry phosphoserine. Residues 506 to 523 (PASVSPTTPTSPTEGEAS) show a composition bias toward low complexity. A phosphothreonine mark is found at Thr512, Thr513, and Thr515. Ser516 carries the post-translational modification Phosphoserine.

This sequence belongs to the dynein light intermediate chain family. In terms of assembly, homodimer. The cytoplasmic dynein 1 complex consists of two catalytic heavy chains (HCs) and a number of non-catalytic subunits presented by intermediate chains (ICs), light intermediate chains (LICs) and light chains (LCs); the composition seems to vary in respect to the IC, LIC and LC composition. The heavy chain homodimer serves as a scaffold for the probable homodimeric assembly of the respective non-catalytic subunits. The ICs and LICs bind directly to the HC dimer and the LCs assemble on the IC dimer. Self-associates. Interacts with DYNC1H1; DYNC1LI1 and DYNC1LI2 bind mutually exclusive to DYNC1H1. Interacts with PCNT. Forms a complex with RAB11FIP3 and RAB11A1; the interaction between DYNC1LI1 and RAB11FIP3 is direct and induces DYNC1LI1 localization onto endosomal membrane; the complex regulates endocytic trafficking. Interacts with RUFY3. Phosphorylated during mitosis but not in interphase.

The protein resides in the cytoplasm. Its subcellular location is the chromosome. It localises to the centromere. It is found in the kinetochore. The protein localises to the cytoskeleton. The protein resides in the spindle pole. Its subcellular location is the recycling endosome membrane. Acts as one of several non-catalytic accessory components of the cytoplasmic dynein 1 complex that are thought to be involved in linking dynein to cargos and to adapter proteins that regulate dynein function. Cytoplasmic dynein 1 acts as a motor for the intracellular retrograde motility of vesicles and organelles along microtubules. May play a role in binding dynein to membranous organelles or chromosomes. Probably involved in the microtubule-dependent transport of pericentrin. Is required for progress through the spindle assembly checkpoint. The phosphorylated form appears to be involved in the selective removal of MAD1L1 and MAD1L2 but not BUB1B from kinetochores. Forms a functional Rab11/RAB11FIP3/dynein complex onto endosomal membrane that regulates the movement of peripheral sorting endosomes (SE) along microtubule tracks toward the microtubule organizing center/centrosome, generating the endosomal recycling compartment (ERC). The chain is Cytoplasmic dynein 1 light intermediate chain 1 (Dync1li1) from Mus musculus (Mouse).